A 63-amino-acid polypeptide reads, in one-letter code: Large ribosomal subunit protein uL29 (63 aa).

This sequence belongs to the universal ribosomal protein uL29 family.

This chain is Large ribosomal subunit protein uL29, found in Bordetella pertussis (strain Tohama I / ATCC BAA-589 / NCTC 13251).